An 843-amino-acid polypeptide reads, in one-letter code: Protein P (843 aa).

Residues 1–177 (MPLSYPHFRK…FCGSPYSWEQ (177 aa)) are terminal protein domain (TP). Positions 178–346 (ELQHGSTSLN…YCLSHIINLL (169 aa)) are spacer. Residues 284 to 308 (EANPSLSTSKRHTSTGNAVELNPVP) are disordered. Positions 347–690 (EDWGPCYEHG…YMNLYPVARQ (344 aa)) are polymerase/reverse transcriptase domain (RT). The region spanning 357 to 600 (QHHIRTPRTP…YNLHFMGYVI (244 aa)) is the Reverse transcriptase domain. Mg(2+) is bound by residues aspartate 429, aspartate 551, and aspartate 552.

It belongs to the hepadnaviridae P protein family.

It carries out the reaction DNA(n) + a 2'-deoxyribonucleoside 5'-triphosphate = DNA(n+1) + diphosphate. The catalysed reaction is Endonucleolytic cleavage to 5'-phosphomonoester.. Activated by host HSP70 and HSP40 in vitro to be able to bind the epsilon loop of the pgRNA. Because deletion of the RNase H region renders the protein partly chaperone-independent, the chaperones may be needed indirectly to relieve occlusion of the RNA-binding site by this domain. Inhibited by several reverse-transcriptase inhibitors: Lamivudine, Adefovir and Entecavir. Its function is as follows. Multifunctional enzyme that converts the viral RNA genome into dsDNA in viral cytoplasmic capsids. This enzyme displays a DNA polymerase activity that can copy either DNA or RNA templates, and a ribonuclease H (RNase H) activity that cleaves the RNA strand of RNA-DNA heteroduplexes in a partially processive 3'- to 5'-endonucleasic mode. Neo-synthesized pregenomic RNA (pgRNA) are encapsidated together with the P protein, and reverse-transcribed inside the nucleocapsid. Initiation of reverse-transcription occurs first by binding the epsilon loop on the pgRNA genome, and is initiated by protein priming, thereby the 5'-end of (-)DNA is covalently linked to P protein. Partial (+)DNA is synthesized from the (-)DNA template and generates the relaxed circular DNA (RC-DNA) genome. After budding and infection, the RC-DNA migrates in the nucleus, and is converted into a plasmid-like covalently closed circular DNA (cccDNA). The activity of P protein does not seem to be necessary for cccDNA generation, and is presumably released from (+)DNA by host nuclear DNA repair machinery. The chain is Protein P from Homo sapiens (Human).